A 573-amino-acid polypeptide reads, in one-letter code: Pentatricopeptide repeat-containing protein At3g62890 (573 aa).

PPR repeat units follow at residues 23-60, 61-95, 96-126, 127-161, 162-188, 198-232, 233-263, 265-295, 301-336, and 337-367; these read ESFLWNIIIRAIVHNVSSPQRHSPISVYLRMRNHRVSP, DFHTFPFLLPSFHNPLHLPLGQRTHAQILLFGLDK, DPFVRTSLLNMYSSCGDLRSAQRVFDDSGSK, DLPAWNSVVNAYAKAGLIDDARKLFDEMPERNVIS, WSCLINGYVMCGKYKEALDLFREMQLP, NEFTMSTVLSACGRLGALEQGKWVHAYIDKYHVEI, DIVLGTALIDMYAKCGSLERAKRVFNALGSK, DVKAYSAMICCLAMYGLTDECFQLFSEMTTS, NSVTFVGILGACVHRGLINEGKSYFKMMIEEFGITP, and SIQHYGCMVDLYGRSGLIKEAESFIASMPME. Residues 372-447 form a type E motif; degenerate region; sequence IWGSLLSGSR…VPGCSYVEVE (76 aa). Residues 448 to 478 are type E(+) motif; sequence GVVHEFVVGDESQQESERIYAMLDEIMQRLR. The segment at 479–573 is type DYW motif; sequence EAGYVTDTKE…DGSCSCRDFW (95 aa).

It belongs to the PPR family. PCMP-H subfamily.

In Arabidopsis thaliana (Mouse-ear cress), this protein is Pentatricopeptide repeat-containing protein At3g62890 (PCMP-H82).